We begin with the raw amino-acid sequence, 495 residues long: Aspartyl/glutamyl-tRNA(Asn/Gln) amidotransferase subunit B (495 aa).

It belongs to the GatB/GatE family. GatB subfamily. Heterotrimer of A, B and C subunits.

It carries out the reaction L-glutamyl-tRNA(Gln) + L-glutamine + ATP + H2O = L-glutaminyl-tRNA(Gln) + L-glutamate + ADP + phosphate + H(+). The enzyme catalyses L-aspartyl-tRNA(Asn) + L-glutamine + ATP + H2O = L-asparaginyl-tRNA(Asn) + L-glutamate + ADP + phosphate + 2 H(+). In terms of biological role, allows the formation of correctly charged Asn-tRNA(Asn) or Gln-tRNA(Gln) through the transamidation of misacylated Asp-tRNA(Asn) or Glu-tRNA(Gln) in organisms which lack either or both of asparaginyl-tRNA or glutaminyl-tRNA synthetases. The reaction takes place in the presence of glutamine and ATP through an activated phospho-Asp-tRNA(Asn) or phospho-Glu-tRNA(Gln). This Methylocella silvestris (strain DSM 15510 / CIP 108128 / LMG 27833 / NCIMB 13906 / BL2) protein is Aspartyl/glutamyl-tRNA(Asn/Gln) amidotransferase subunit B.